A 314-amino-acid chain; its full sequence is 3'-5' exoribonuclease YhaM (314 aa).

In terms of domain architecture, HD spans 163-279 (HVVSMLDLAK…LHYIDNLDAK (117 aa)).

It belongs to the YhaM family.

Shows a 3'-5' exoribonuclease activity. In Bacillus cereus (strain AH820), this protein is 3'-5' exoribonuclease YhaM.